We begin with the raw amino-acid sequence, 84 residues long: MATGTDQAVGFGLVAVSLIIFTYYTTWVILLPFIDSQHVIHKYFLPRAYAVLLPLAAGLLLLLFVGLFITYVLLKSQKVTKKAQ.

Transmembrane regions (helical) follow at residues 11-31 (FGLV…VILL) and 49-69 (YAVL…GLFI).

This sequence belongs to the DPM2 family. Component of the dolichol-phosphate mannose (DPM) synthase complex composed of DPM1, DPM2 and DPM3; in the complex interacts directly with DPM3. Component of the glycosylphosphatidylinositol-N-acetylglucosaminyltransferase (GPI-GnT) complex composed at least by PIGA, PIGC, PIGH, PIGP, PIGQ, PIGY and DPM2. Interacts with PIGA, PIGC and PIGQ.

It localises to the endoplasmic reticulum membrane. It participates in protein modification; protein glycosylation. In terms of biological role, regulates the biosynthesis of dolichol phosphate-mannose. Regulatory subunit of the dolichol-phosphate mannose (DPM) synthase complex; essential for the ER localization and stable expression of DPM1. Part of the glycosylphosphatidylinositol-N-acetylglucosaminyltransferase (GPI-GnT) complex that catalyzes the transfer of N-acetylglucosamine from UDP-N-acetylglucosamine to phosphatidylinositol and participates in the first step of GPI biosynthesis. May act by regulating the GPI-GNT complex. This is Dolichol phosphate-mannose biosynthesis regulatory protein from Rattus norvegicus (Rat).